A 1158-amino-acid chain; its full sequence is Serine/threonine/tyrosine-interacting-like protein 2 (1158 aa).

Disordered regions lie at residues 1–21 (MATRKDTEEEQVVPSEEDEAN), 280–303 (EEREEDYGREGGSAEAEEGEGTGS), 315–337 (EEEDDSASHLSGSSLGKATQASK), 360–392 (LLSDKVPQDGGGWRSASSGQGGEELEDEDVERI), 407–444 (GYRRWGREEEKEEESDAGSSVGRRRRTLSESSAWESVS), 492–527 (SRRYHAKSKREEAADRSSEAGSRVREDDEDSVGSEA), 559–582 (KDLGAGDSSGEPGAEEAVGEKNPS), 597–622 (QKKVGSENKEEVVELSKGEDSALAKK), 873–915 (KVKE…CSSL), and 940–1135 (SGLR…MDDE). Residues 8 to 19 (EEEQVVPSEEDE) show a composition bias toward acidic residues. Residues 132 to 280 (NEVDEVWPNV…LRELNEKLME (149 aa)) form the Tyrosine-protein phosphatase domain. Residues 322–337 (SHLSGSSLGKATQASK) show a composition bias toward polar residues. S377 is subject to Phosphoserine. T433 carries the post-translational modification Phosphothreonine. Over residues 435–444 (SESSAWESVS) the composition is skewed to low complexity. The span at 500–517 (KREEAADRSSEAGSRVRE) shows a compositional bias: basic and acidic residues. Residue S509 is modified to Phosphoserine. Over residues 600–619 (VGSENKEEVVELSKGEDSAL) the composition is skewed to basic and acidic residues. Acidic residues predominate over residues 877-890 (DEDDGVGDGDEDTD). Polar residues-rich tracts occupy residues 897 to 914 (RYSSRSNSQKPETDTCSS) and 952 to 966 (SDWSGSSRGKYTRSS). Low complexity predominate over residues 974 to 983 (KSSSYKFSKS). Position 985 is a phosphoserine (S985). Over residues 990–999 (TSSYHEANGN) the composition is skewed to polar residues. The span at 1000 to 1012 (SVRSTSRFSSSST) shows a compositional bias: low complexity. S1036 is subject to Phosphoserine. 3 stretches are compositionally biased toward basic and acidic residues: residues 1044–1056 (RTPESSEREESPE), 1064–1079 (RSRDWEDVEESSKSDF), and 1094–1111 (RSEEEGEKERTENREEGR). Residues 1126–1135 (REEEEEMDDE) are compositionally biased toward acidic residues.

This sequence belongs to the protein-tyrosine phosphatase family. Non-receptor class dual specificity subfamily.

It localises to the cytoplasm. The protein localises to the myofibril. It is found in the sarcomere. May be required for myofiber maturation. This Homo sapiens (Human) protein is Serine/threonine/tyrosine-interacting-like protein 2.